A 160-amino-acid chain; its full sequence is ATP synthase subunit b (160 aa).

Residues 15–35 (LVIVIGLLFWFLRGFLGGILE) form a helical membrane-spanning segment.

The protein belongs to the ATPase B chain family. As to quaternary structure, F-type ATPases have 2 components, F(1) - the catalytic core - and F(0) - the membrane proton channel. F(1) has five subunits: alpha(3), beta(3), gamma(1), delta(1), epsilon(1). F(0) has four main subunits: a(1), b(1), b'(1) and c(10-14). The alpha and beta chains form an alternating ring which encloses part of the gamma chain. F(1) is attached to F(0) by a central stalk formed by the gamma and epsilon chains, while a peripheral stalk is formed by the delta, b and b' chains.

It is found in the cellular thylakoid membrane. Functionally, f(1)F(0) ATP synthase produces ATP from ADP in the presence of a proton or sodium gradient. F-type ATPases consist of two structural domains, F(1) containing the extramembraneous catalytic core and F(0) containing the membrane proton channel, linked together by a central stalk and a peripheral stalk. During catalysis, ATP synthesis in the catalytic domain of F(1) is coupled via a rotary mechanism of the central stalk subunits to proton translocation. Component of the F(0) channel, it forms part of the peripheral stalk, linking F(1) to F(0). This Synechococcus sp. (strain CC9605) protein is ATP synthase subunit b.